We begin with the raw amino-acid sequence, 206 residues long: MKVGLVDYSMGNMHSVSRAIQQANQQVCVVRSESELAQVHILVVPGVGHFDLAMKKLEQKGLRTGIAKWIAKGNPYIGICLGMHILFETSEEGKEEGLGVYKEQVKRLPVKVIPHMGWNRLECQNSECQNSEWVNWKAWPNAWAYFVHSYGVMASSQACATTTYEKIQMVAAIEKDNCFAMQFHPEKSGEFGLWLWREVMKKAASL.

One can recognise a Glutamine amidotransferase type-1 domain in the interval 2–206 (KVGLVDYSMG…REVMKKAASL (205 aa)). Residue Cys-80 is the Nucleophile of the active site. Catalysis depends on residues His-184 and Glu-186.

Heterodimer of hisH and hisF.

It is found in the plastid. Its subcellular location is the chloroplast. The enzyme catalyses 5-[(5-phospho-1-deoxy-D-ribulos-1-ylimino)methylamino]-1-(5-phospho-beta-D-ribosyl)imidazole-4-carboxamide + L-glutamine = D-erythro-1-(imidazol-4-yl)glycerol 3-phosphate + 5-amino-1-(5-phospho-beta-D-ribosyl)imidazole-4-carboxamide + L-glutamate + H(+). It catalyses the reaction L-glutamine + H2O = L-glutamate + NH4(+). It participates in amino-acid biosynthesis; L-histidine biosynthesis; L-histidine from 5-phospho-alpha-D-ribose 1-diphosphate: step 5/9. Its function is as follows. IGPS catalyzes the conversion of PRFAR and glutamine to IGP, AICAR and glutamate. The HisH subunit catalyzes the hydrolysis of glutamine to glutamate and ammonia as part of the synthesis of IGP and AICAR. The resulting ammonia molecule is channeled to the active site of HisF. The protein is Imidazole glycerol phosphate synthase subunit hisH of Cyanidioschyzon merolae (strain NIES-3377 / 10D) (Unicellular red alga).